A 228-amino-acid chain; its full sequence is Ribonuclease HII (228 aa).

The RNase H type-2 domain maps to 1 to 210 (MKIAGIDEAG…LKKIAEKVES (210 aa)). Asp7, Glu8, and Asp105 together coordinate a divalent metal cation.

The protein belongs to the RNase HII family. In terms of assembly, monomer. Mn(2+) serves as cofactor. Requires Mg(2+) as cofactor.

Its subcellular location is the cytoplasm. It carries out the reaction Endonucleolytic cleavage to 5'-phosphomonoester.. Its function is as follows. Endonuclease that specifically degrades the RNA of RNA-DNA hybrids. The protein is Ribonuclease HII (rnhB) of Thermococcus kodakarensis (strain ATCC BAA-918 / JCM 12380 / KOD1) (Pyrococcus kodakaraensis (strain KOD1)).